Reading from the N-terminus, the 279-residue chain is S-methyl-5'-thioadenosine phosphorylase (279 aa).

Phosphate is bound by residues S13, 55-56 (RH), and 88-89 (TA). Residue M191 participates in substrate binding. T192 lines the phosphate pocket. Residue 215 to 217 (DYD) coordinates substrate.

It belongs to the PNP/MTAP phosphorylase family. MTAP subfamily. Homotrimer.

The protein resides in the cytoplasm. The protein localises to the nucleus. It catalyses the reaction S-methyl-5'-thioadenosine + phosphate = 5-(methylsulfanyl)-alpha-D-ribose 1-phosphate + adenine. Its pathway is amino-acid biosynthesis; L-methionine biosynthesis via salvage pathway; S-methyl-5-thio-alpha-D-ribose 1-phosphate from S-methyl-5'-thioadenosine (phosphorylase route): step 1/1. Functionally, catalyzes the reversible phosphorylation of S-methyl-5'-thioadenosine (MTA) to adenine and 5-methylthioribose-1-phosphate. Involved in the breakdown of MTA, a major by-product of polyamine biosynthesis. Responsible for the first step in the methionine salvage pathway after MTA has been generated from S-adenosylmethionine. Has broad substrate specificity with 6-aminopurine nucleosides as preferred substrates. This Anopheles darlingi (Mosquito) protein is S-methyl-5'-thioadenosine phosphorylase.